The sequence spans 269 residues: Formamidopyrimidine-DNA glycosylase (269 aa).

P2 serves as the catalytic Schiff-base intermediate with DNA. The active-site Proton donor is E3. Catalysis depends on K57, which acts as the Proton donor; for beta-elimination activity. 3 residues coordinate DNA: H90, R109, and K150. The segment at 235-269 (QVYGRKGEPCRVCGTPIVATKHAQRATFYCRQCQK) adopts an FPG-type zinc-finger fold. Catalysis depends on R259, which acts as the Proton donor; for delta-elimination activity.

This sequence belongs to the FPG family. In terms of assembly, monomer. Zn(2+) is required as a cofactor.

It carries out the reaction Hydrolysis of DNA containing ring-opened 7-methylguanine residues, releasing 2,6-diamino-4-hydroxy-5-(N-methyl)formamidopyrimidine.. It catalyses the reaction 2'-deoxyribonucleotide-(2'-deoxyribose 5'-phosphate)-2'-deoxyribonucleotide-DNA = a 3'-end 2'-deoxyribonucleotide-(2,3-dehydro-2,3-deoxyribose 5'-phosphate)-DNA + a 5'-end 5'-phospho-2'-deoxyribonucleoside-DNA + H(+). In terms of biological role, involved in base excision repair of DNA damaged by oxidation or by mutagenic agents. Acts as a DNA glycosylase that recognizes and removes damaged bases. Has a preference for oxidized purines, such as 7,8-dihydro-8-oxoguanine (8-oxoG). Has AP (apurinic/apyrimidinic) lyase activity and introduces nicks in the DNA strand. Cleaves the DNA backbone by beta-delta elimination to generate a single-strand break at the site of the removed base with both 3'- and 5'-phosphates. In Escherichia coli O7:K1 (strain IAI39 / ExPEC), this protein is Formamidopyrimidine-DNA glycosylase.